The primary structure comprises 367 residues: Glutamate 5-kinase (367 aa).

ATP is bound at residue Lys10. Ser50, Asp137, and Asn149 together coordinate substrate. 169 to 170 (TD) lines the ATP pocket. The 79-residue stretch at 275-353 (AGEITVDEGA…QQIDAILGYE (79 aa)) folds into the PUA domain.

The protein belongs to the glutamate 5-kinase family.

The protein resides in the cytoplasm. It carries out the reaction L-glutamate + ATP = L-glutamyl 5-phosphate + ADP. It participates in amino-acid biosynthesis; L-proline biosynthesis; L-glutamate 5-semialdehyde from L-glutamate: step 1/2. Its function is as follows. Catalyzes the transfer of a phosphate group to glutamate to form L-glutamate 5-phosphate. The polypeptide is Glutamate 5-kinase (Salmonella paratyphi B (strain ATCC BAA-1250 / SPB7)).